A 361-amino-acid chain; its full sequence is Dihydroorotate dehydrogenase (quinone) (361 aa).

FMN-binding positions include 69–73 (AGFDK) and threonine 93. Lysine 73 is a binding site for substrate. Substrate is bound at residue 118-122 (NRLGF). 2 residues coordinate FMN: asparagine 147 and asparagine 180. Asparagine 180 is a substrate binding site. Serine 183 acts as the Nucleophile in catalysis. Asparagine 185 contributes to the substrate binding site. FMN is bound by residues lysine 221 and threonine 249. Residue 250–251 (NT) coordinates substrate. FMN-binding positions include glycine 271, glycine 300, and 321-322 (YT).

It belongs to the dihydroorotate dehydrogenase family. Type 2 subfamily. Monomer. It depends on FMN as a cofactor.

It localises to the cell membrane. It catalyses the reaction (S)-dihydroorotate + a quinone = orotate + a quinol. It participates in pyrimidine metabolism; UMP biosynthesis via de novo pathway; orotate from (S)-dihydroorotate (quinone route): step 1/1. In terms of biological role, catalyzes the conversion of dihydroorotate to orotate with quinone as electron acceptor. This Roseiflexus sp. (strain RS-1) protein is Dihydroorotate dehydrogenase (quinone).